The following is a 127-amino-acid chain: uncharacterized protein (127 aa).

A run of 3 helical transmembrane segments spans residues 20-42, 54-76, and 91-110; these read NMIWLYEVYMLYKTYTSYFFMSS, IYFCYCANFIALFRVIFGTIFVY, and WILIYLKGSINSLLYMASFT.

It localises to the membrane. The protein localises to the cytoplasm. This is an uncharacterized protein from Schizosaccharomyces pombe (strain 972 / ATCC 24843) (Fission yeast).